Here is a 94-residue protein sequence, read N- to C-terminus: Small ribosomal subunit protein uS19 (94 aa).

Residues 73–94 are disordered; it reads EFSPTRRFGGHADKKSKKGQVK.

It belongs to the universal ribosomal protein uS19 family.

Protein S19 forms a complex with S13 that binds strongly to the 16S ribosomal RNA. The sequence is that of Small ribosomal subunit protein uS19 from Kosmotoga olearia (strain ATCC BAA-1733 / DSM 21960 / TBF 19.5.1).